Reading from the N-terminus, the 85-residue chain is Phosphocarrier protein HPr (85 aa).

Residues Met-1–Glu-85 form the HPr domain. His-15 serves as the catalytic Pros-phosphohistidine intermediate.

Its subcellular location is the cytoplasm. In terms of biological role, general (non sugar-specific) component of the phosphoenolpyruvate-dependent sugar phosphotransferase system (sugar PTS). This major carbohydrate active-transport system catalyzes the phosphorylation of incoming sugar substrates concomitantly with their translocation across the cell membrane. The phosphoryl group from phosphoenolpyruvate (PEP) is transferred to the phosphoryl carrier protein HPr by enzyme I. Phospho-HPr then transfers it to the PTS EIIA domain. This Klebsiella pneumoniae protein is Phosphocarrier protein HPr (ptsH).